The chain runs to 713 residues: Low-density lipoprotein receptor-related protein 10 (713 aa).

A signal peptide spans 1–17 (MLSALPLLFLLLGGALA). Residues 18 to 441 (RPDRITFPRS…WDCSYALPRK (424 aa)) lie on the Extracellular side of the membrane. 2 cysteine pairs are disulfide-bonded: Cys29–Cys58 and Cys81–Cys99. In terms of domain architecture, CUB 1 spans 29–137 (CEAPPAVLSE…QGFLLTYSQD (109 aa)). The N-linked (GlcNAc...) asparagine glycan is linked to Asn57. A glycan (N-linked (GlcNAc...) asparagine) is linked at Asn112. The LDL-receptor class A 1 domain occupies 140 to 176 (LCLQEEFQCLNHRCIPAAQRCDGIDACGDGSDEAGCS). 4 disulfide bridges follow: Cys141-Cys153, Cys148-Cys166, Cys160-Cys175, and Cys193-Cys221. A CUB 2 domain is found at 193-306 (CNLTLEDFYG…RGFNATYHVR (114 aa)). Residues Asn194 and Asn300 are each glycosylated (N-linked (GlcNAc...) asparagine). 3 LDL-receptor class A domains span residues 308–355 (YCLP…EGCP), 356–398 (GCPP…RRCR), and 399–435 (HCQPGNFRCRDEKCVYETWVCDGQPDCTDGSDEWDCS). 9 cysteine pairs are disulfide-bonded: Cys309–Cys332, Cys316–Cys345, Cys339–Cys354, Cys357–Cys375, Cys364–Cys388, Cys382–Cys397, Cys400–Cys412, Cys407–Cys425, and Cys419–Cys434. Residues 442 to 462 (VITAAVIGSLVCGLLLVIALG) traverse the membrane as a helical segment. The Cytoplasmic portion of the chain corresponds to 463-713 (CTCKLYAIRT…VEAEDEPLLA (251 aa)). A disordered region spans residues 566 to 636 (LLPRTNTPAR…TLPALATVSE (71 aa)). Thr596 carries the phosphothreonine modification. The span at 614–626 (PPLPIKTPIPTPS) shows a compositional bias: pro residues.

This sequence belongs to the LDLR family. Highly expressed in heart, lung, liver and liver. Expressed at low level in brain and spleen. Weakly or not expressed in testis and skeletal muscle. In liver, it is expressed in hepatocytes and at higher level in sinusoidal lining. In the kidney, it is expressed in peritubular capillaries. In brain, it is expressed in the epithelium of the choroid plexus ependymal cells of the third ventricle pia matter, and to lesser extent in hippocampal fields CA2 and CA3.

The protein localises to the membrane. It is found in the coated pit. Functionally, probable receptor, which is involved in the internalization of lipophilic molecules and/or signal transduction. May be involved in the uptake of lipoprotein APOE in liver. The protein is Low-density lipoprotein receptor-related protein 10 (Lrp10) of Mus musculus (Mouse).